The following is a 222-amino-acid chain: Charged multivesicular body protein 3 (222 aa).

The N-myristoyl glycine moiety is linked to residue glycine 2. An intramolecular interaction with C-terminus region spans residues 2 to 113 (GLFGKTQEKP…LQKSTEVMKA (112 aa)). A coiled-coil region spans residues 22–54 (KIRKEMRVVDRQIRDIQREEEKVKRSVKDAAKK). 2 important for autoinhibitory function regions span residues 59-64 (VCIVLA) and 168-169 (IL). A coiled-coil region spans residues 141 to 222 (EEMLEDTFES…MQSRLATLRS (82 aa)). An intramolecular interaction with N-terminus region spans residues 151 to 220 (MDDQEEMEEE…EAMQSRLATL (70 aa)). Residues 151–222 (MDDQEEMEEE…MQSRLATLRS (72 aa)) are interaction with VPS4A. Lysine 179 is covalently cross-linked (Glycyl lysine isopeptide (Lys-Gly) (interchain with G-Cter in ubiquitin)). The disordered stretch occupies residues 180–222 (APSKVTDALPEPEPPGAMAASEDEEEEEEALEAMQSRLATLRS). A Phosphoserine modification is found at serine 200. The segment covering 200 to 210 (SEDEEEEEEAL) has biased composition (acidic residues). An MIT-interacting motif motif is present at residues 201–211 (EDEEEEEEALE). Interaction with STAMBP stretches follow at residues 203–207 (EEEEE) and 221–222 (RS).

It belongs to the SNF7 family. Probable core component of the endosomal sorting required for transport complex III (ESCRT-III). ESCRT-III components are thought to multimerize to form a flat lattice on the perimeter membrane of the endosome. Several assembly forms of ESCRT-III may exist that interact and act sequentially. Forms a metastable monomer in solution; its core structure (without part of the putative autoinhibitory C-terminal acidic region) oligomerizes into a flat lattice via two different dimerization interfaces. In vitro, heteromerizes with CHMP2A (but not CHMP4) to form helical tubular structures that expose membrane-interacting sites on the outside whereas VPS4B can associate on the inside of the tubule. May interact with IGFBP7; the relevance of such interaction however remains unclear. Interacts with CHMP2A. Interacts with CHMP4A; the interaction requires the release of CHMP4A autoinhibition. Interacts with VPS4A. Interacts with STAMBP; the interaction appears to relieve the autoinhibition of CHMP3. Interacts with VTA1. In terms of tissue distribution, widely expressed. Expressed in heart, brain, placenta, lung, liver, skeletal muscle, kidney and pancreas.

It localises to the cytoplasm. Its subcellular location is the cytosol. The protein resides in the membrane. It is found in the endosome. The protein localises to the late endosome membrane. In terms of biological role, probable core component of the endosomal sorting required for transport complex III (ESCRT-III) which is involved in multivesicular bodies (MVBs) formation and sorting of endosomal cargo proteins into MVBs. MVBs contain intraluminal vesicles (ILVs) that are generated by invagination and scission from the limiting membrane of the endosome and mostly are delivered to lysosomes enabling degradation of membrane proteins, such as stimulated growth factor receptors, lysosomal enzymes and lipids. The MVB pathway appears to require the sequential function of ESCRT-O, -I,-II and -III complexes. ESCRT-III proteins mostly dissociate from the invaginating membrane before the ILV is released. The ESCRT machinery also functions in topologically equivalent membrane fission events, such as the terminal stages of cytokinesis and the budding of enveloped viruses (HIV-1 and other lentiviruses). ESCRT-III proteins are believed to mediate the necessary vesicle extrusion and/or membrane fission activities, possibly in conjunction with the AAA ATPase VPS4. Selectively binds to phosphatidylinositol 3,5-bisphosphate PtdIns(3,5)P2 and PtdIns(3,4)P2 in preference to other phosphoinositides tested. Involved in late stages of cytokinesis. Plays a role in endosomal sorting/trafficking of EGF receptor. Isoform 2 prevents stress-mediated cell death and accumulation of reactive oxygen species when expressed in yeast cells. This is Charged multivesicular body protein 3 (CHMP3) from Homo sapiens (Human).